The chain runs to 377 residues: Flagellin (377 aa).

The protein belongs to the bacterial flagellin family.

It localises to the secreted. The protein localises to the bacterial flagellum. Its function is as follows. Flagellin is the subunit protein which polymerizes to form the filaments of bacterial flagella. This is Flagellin (fla) from Clostridium tyrobutyricum.